Consider the following 378-residue polypeptide: uncharacterized protein (378 aa).

Helical transmembrane passes span 12 to 34 (SLAFALYDTGETILGALVVSTFF), 44 to 66 (VKIYSLSYGISLLASFALAIFLG), 92 to 112 (SIALLYGTPYLALLSFLLMLI), 132 to 154 (GFASGLGVSFGYVGSAIALIFLA), 161 to 180 (EVYAVVGLIFLILAVPSIIT), 200 to 222 (TFLLFLLSLLTLTEVANTLIAMM), 235 to 257 (VEIYRIIGFSALGGVLGGIFWGV), 267 to 285 (VFPLGFFLWSFFFILLFFA), 290 to 312 (LIFVGLLAGFSLAHLWSTSRVYI), 327 to 349 (FLSLTERVASSFGLFLWSFFLFI), and 356 to 373 (LSALLMGTLPLIGFFIYL).

The protein resides in the cell membrane. This is an uncharacterized protein from Aquifex aeolicus (strain VF5).